Consider the following 199-residue polypeptide: Probable cobalt-precorrin-6B C(15)-methyltransferase (decarboxylating) (199 aa).

S-adenosyl-L-methionine contacts are provided by residues Thr24, 48 to 52, Asp72, and Ala101; that span reads GCGTG.

Belongs to the methyltransferase superfamily. Archaeal-type CbiT family.

It catalyses the reaction Co-precorrin-6B + S-adenosyl-L-methionine = Co-precorrin-7 + S-adenosyl-L-homocysteine + CO2. The protein operates within cofactor biosynthesis; adenosylcobalamin biosynthesis; cob(II)yrinate a,c-diamide from sirohydrochlorin (anaerobic route): step 8/10. Its function is as follows. Catalyzes the methylation of C-15 in cobalt-precorrin-6B followed by the decarboxylation of C-12 to form cobalt-precorrin-7. The protein is Probable cobalt-precorrin-6B C(15)-methyltransferase (decarboxylating) of Saccharolobus islandicus (strain Y.N.15.51 / Yellowstone #2) (Sulfolobus islandicus).